A 367-amino-acid chain; its full sequence is Phospho-N-acetylmuramoyl-pentapeptide-transferase (367 aa).

10 consecutive transmembrane segments (helical) span residues 30 to 50, 71 to 91, 94 to 114, 138 to 158, 169 to 189, 200 to 220, 237 to 257, 264 to 284, 289 to 309, and 344 to 364; these read AAAI…IALL, LPTM…LLWA, TDPH…IGFI, ISLG…SVLM, LTID…TALS, GLAA…AYLA, GGEI…FLWF, IIMG…TALL, LLLP…SLQV, and KIVI…LMTL.

This sequence belongs to the glycosyltransferase 4 family. MraY subfamily. It depends on Mg(2+) as a cofactor.

It localises to the cell inner membrane. It catalyses the reaction UDP-N-acetyl-alpha-D-muramoyl-L-alanyl-gamma-D-glutamyl-meso-2,6-diaminopimeloyl-D-alanyl-D-alanine + di-trans,octa-cis-undecaprenyl phosphate = di-trans,octa-cis-undecaprenyl diphospho-N-acetyl-alpha-D-muramoyl-L-alanyl-D-glutamyl-meso-2,6-diaminopimeloyl-D-alanyl-D-alanine + UMP. It participates in cell wall biogenesis; peptidoglycan biosynthesis. Its function is as follows. Catalyzes the initial step of the lipid cycle reactions in the biosynthesis of the cell wall peptidoglycan: transfers peptidoglycan precursor phospho-MurNAc-pentapeptide from UDP-MurNAc-pentapeptide onto the lipid carrier undecaprenyl phosphate, yielding undecaprenyl-pyrophosphoryl-MurNAc-pentapeptide, known as lipid I. The chain is Phospho-N-acetylmuramoyl-pentapeptide-transferase from Chlorobium phaeovibrioides (strain DSM 265 / 1930) (Prosthecochloris vibrioformis (strain DSM 265)).